The following is a 629-amino-acid chain: Pescadillo homolog (629 aa).

In terms of domain architecture, BRCT spans 321–414; the sequence is RLRTLFKGLK…QLLPTNKYFI (94 aa). Disordered regions lie at residues 439–470, 488–568, and 598–629; these read KALLDPSLIETHAQSDEDSEDEAEKEEEETVD, EYKK…MVKP, and IEASEKEARKTAKREARKEAAAAAAKASKLGK. Serine 453 and serine 457 each carry phosphoserine. Acidic residues-rich tracts occupy residues 454 to 470 and 498 to 523; these read DEDSEDEAEKEEEETVD and VNEDEEDPEDDDEDDDEEEAEEEELD. The segment covering 524–535 has biased composition (basic and acidic residues); it reads EKSKRLQEEKQK. Residues 542 to 551 are compositionally biased toward basic residues; sequence KVHKVNKRQV. Basic and acidic residues-rich tracts occupy residues 552–561 and 598–617; these read HKAEVDEHRL and IEASEKEARKTAKREARKEA. Positions 584–627 form a coiled coil; that stretch reads KEKEEWLLRKKRRTIEASEKEARKTAKREARKEAAAAAAKASKL. A compositionally biased stretch (low complexity) spans 618 to 629; it reads AAAAAKASKLGK.

It belongs to the pescadillo family.

Its subcellular location is the nucleus. The protein localises to the nucleolus. It localises to the nucleoplasm. Its function is as follows. Required for maturation of ribosomal RNAs and formation of the large ribosomal subunit. The protein is Pescadillo homolog of Drosophila erecta (Fruit fly).